A 348-amino-acid polypeptide reads, in one-letter code: UDP-3-O-acylglucosamine N-acyltransferase (348 aa).

The active-site Proton acceptor is the His257.

The protein belongs to the transferase hexapeptide repeat family. LpxD subfamily. In terms of assembly, homotrimer.

It carries out the reaction a UDP-3-O-[(3R)-3-hydroxyacyl]-alpha-D-glucosamine + a (3R)-hydroxyacyl-[ACP] = a UDP-2-N,3-O-bis[(3R)-3-hydroxyacyl]-alpha-D-glucosamine + holo-[ACP] + H(+). The protein operates within bacterial outer membrane biogenesis; LPS lipid A biosynthesis. In terms of biological role, catalyzes the N-acylation of UDP-3-O-acylglucosamine using 3-hydroxyacyl-ACP as the acyl donor. Is involved in the biosynthesis of lipid A, a phosphorylated glycolipid that anchors the lipopolysaccharide to the outer membrane of the cell. The protein is UDP-3-O-acylglucosamine N-acyltransferase of Bartonella quintana (strain Toulouse) (Rochalimaea quintana).